A 304-amino-acid chain; its full sequence is Putative S-adenosyl-L-methionine-dependent methyltransferase MAV_1058 (304 aa).

S-adenosyl-L-methionine is bound by residues aspartate 128 and 157-158; that span reads DL.

It belongs to the UPF0677 family.

Exhibits S-adenosyl-L-methionine-dependent methyltransferase activity. This is Putative S-adenosyl-L-methionine-dependent methyltransferase MAV_1058 from Mycobacterium avium (strain 104).